The primary structure comprises 143 residues: Nucleoside diphosphate kinase (143 aa).

ATP contacts are provided by lysine 11, phenylalanine 59, arginine 87, threonine 93, arginine 104, and asparagine 114. Histidine 117 serves as the catalytic Pros-phosphohistidine intermediate.

The protein belongs to the NDK family. In terms of assembly, homotetramer. It depends on Mg(2+) as a cofactor.

The protein localises to the cytoplasm. It carries out the reaction a 2'-deoxyribonucleoside 5'-diphosphate + ATP = a 2'-deoxyribonucleoside 5'-triphosphate + ADP. The enzyme catalyses a ribonucleoside 5'-diphosphate + ATP = a ribonucleoside 5'-triphosphate + ADP. Functionally, major role in the synthesis of nucleoside triphosphates other than ATP. The ATP gamma phosphate is transferred to the NDP beta phosphate via a ping-pong mechanism, using a phosphorylated active-site intermediate. This is Nucleoside diphosphate kinase from Colwellia psychrerythraea (strain 34H / ATCC BAA-681) (Vibrio psychroerythus).